We begin with the raw amino-acid sequence, 143 residues long: uncharacterized protein (143 aa).

Residues D5 to A137 form the HTH marR-type domain. A DNA-binding region (H-T-H motif) is located at residues P51–D74.

As to quaternary structure, homodimer.

This is an uncharacterized protein from Mycobacterium bovis (strain ATCC BAA-935 / AF2122/97).